We begin with the raw amino-acid sequence, 127 residues long: Histone H2B type 1-A (127 aa).

The interval Met-1–Lys-36 is disordered. Pro-2 is modified (N-acetylproline). Residues Lys-7, Lys-13, Lys-14, Lys-17, Lys-18, Lys-22, and Lys-25 each carry the N6-acetyllysine; alternate modification. 8 positions are modified to N6-crotonyllysine; alternate: Lys-7, Lys-13, Lys-14, Lys-17, Lys-18, Lys-22, Lys-25, and Lys-36. An N6-lactoyllysine; alternate mark is found at Lys-7 and Lys-13. A Glycyl lysine isopeptide (Lys-Gly) (interchain with G-Cter in SUMO2); alternate cross-link involves residue Lys-7. An N6-lactoyllysine; alternate mark is found at Lys-17, Lys-18, Lys-22, and Lys-25. Lys-22 participates in a covalent cross-link: Glycyl lysine isopeptide (Lys-Gly) (interchain with G-Cter in SUMO2); alternate. Lys-36 is subject to N6-succinyllysine; alternate. Lys-36 is covalently cross-linked (Glycyl lysine isopeptide (Lys-Gly) (interchain with G-Cter in ubiquitin); alternate). Phosphoserine is present on Ser-38. At Lys-45 the chain carries N6-lactoyllysine; alternate. The residue at position 48 (Lys-48) is an N6-methyllysine. Lys-59 is modified (N6,N6-dimethyllysine). Arg-81 bears the Dimethylated arginine mark. Ser-86 bears the Phosphoserine mark. The residue at position 87 (Lys-87) is an N6-acetyllysine; alternate. Lys-87 carries the post-translational modification N6-lactoyllysine; alternate. Lys-87 carries the N6,N6,N6-trimethyllysine; alternate modification. Residues Arg-88 and Arg-94 each carry the omega-N-methylarginine modification. Lys-110 is modified (N6-lactoyllysine; alternate). Lys-110 is modified (N6-methyllysine). Thr-117 bears the Phosphothreonine mark. An N6-lactoyllysine; alternate mark is found at Lys-118 and Lys-122. Residues Lys-118 and Lys-122 each carry the N6-succinyllysine; alternate modification. Lys-118 carries the N6-methylated lysine; alternate modification. Lys-122 participates in a covalent cross-link: Glycyl lysine isopeptide (Lys-Gly) (interchain with G-Cter in ubiquitin); alternate.

This sequence belongs to the histone H2B family. In terms of assembly, the nucleosome is a histone octamer containing two molecules each of H2A, H2B, H3 and H4 assembled in one H3-H4 heterotetramer and two H2A-H2B heterodimers. Monoubiquitination at Lys-36 (H2BK34Ub) by the MSL1/MSL2 dimer is required for histone H3 'Lys-4' (H3K4me) and 'Lys-79' (H3K79me) methylation and transcription activation at specific gene loci, such as HOXA9 and MEIS1 loci. Similarly, monoubiquitination at Lys-122 (H2BK120Ub) by the RNF20/40 complex gives a specific tag for epigenetic transcriptional activation and is also prerequisite for histone H3 'Lys-4' and 'Lys-79' methylation. It also functions cooperatively with the FACT dimer to stimulate elongation by RNA polymerase II. H2BK120Ub also acts as a regulator of mRNA splicing: deubiquitination by USP49 is required for efficient cotranscriptional splicing of a large set of exons. Post-translationally, crotonylation (Kcr) is specifically present in male germ cells and marks testis-specific genes in post-meiotic cells, including X-linked genes that escape sex chromosome inactivation in haploid cells. Crotonylation marks active promoters and enhancers and confers resistance to transcriptional repressors. It is also associated with post-meiotically activated genes on autosomes. In terms of processing, acetylated during spermatogenesis. Acetylated form is most abundant in spermatogonia compared to spermatocytes and round spermatids. Phosphorylated at Thr-117 in spermatogonia, spermatocytes and round spermatids. Post-translationally, methylated at Lys-118 in spermatogonia, spermatocytes and round spermatids. In terms of processing, lactylated in macrophages by EP300/P300 by using lactoyl-CoA directly derived from endogenous or exogenous lactate, leading to stimulates gene transcription. As to expression, mainly expressed in testis, and the corresponding protein is also present in mature sperm (at protein level). Also found in some fat cells.

Its subcellular location is the nucleus. It localises to the chromosome. Functionally, variant histone specifically required to direct the transformation of dissociating nucleosomes to protamine in male germ cells. Entirely replaces classical histone H2B prior nucleosome to protamine transition and probably acts as a nucleosome dissociating factor that creates a more dynamic chromatin, facilitating the large-scale exchange of histones. Core component of nucleosome. Nucleosomes wrap and compact DNA into chromatin, limiting DNA accessibility to the cellular machineries which require DNA as a template. Histones thereby play a central role in transcription regulation, DNA repair, DNA replication and chromosomal stability. DNA accessibility is regulated via a complex set of post-translational modifications of histones, also called histone code, and nucleosome remodeling. Also found in fat cells, its function and the presence of post-translational modifications specific to such cells are still unclear. The polypeptide is Histone H2B type 1-A (Homo sapiens (Human)).